Reading from the N-terminus, the 263-residue chain is Diphthine synthase (263 aa).

S-adenosyl-L-methionine-binding positions include leucine 9, aspartate 84, methionine 87, 112-113, leucine 164, alanine 207, and histidine 232; that span reads SI.

This sequence belongs to the diphthine synthase family. Homodimer.

It carries out the reaction 2-[(3S)-amino-3-carboxypropyl]-L-histidyl-[translation elongation factor 2] + 3 S-adenosyl-L-methionine = diphthine-[translation elongation factor 2] + 3 S-adenosyl-L-homocysteine + 3 H(+). The protein operates within protein modification; peptidyl-diphthamide biosynthesis. S-adenosyl-L-methionine-dependent methyltransferase that catalyzes the trimethylation of the amino group of the modified target histidine residue in translation elongation factor 2 (EF-2), to form an intermediate called diphthine. The three successive methylation reactions represent the second step of diphthamide biosynthesis. The chain is Diphthine synthase from Methanosphaera stadtmanae (strain ATCC 43021 / DSM 3091 / JCM 11832 / MCB-3).